The following is a 160-amino-acid chain: Large ribosomal subunit protein uL16 (160 aa).

The span at 138-148 (KNLEVSSQENT) shows a compositional bias: polar residues. Positions 138–160 (KNLEVSSQENTKNNKESQEEVKQ) are disordered. Positions 149–160 (KNNKESQEEVKQ) are enriched in basic and acidic residues.

The protein belongs to the universal ribosomal protein uL16 family. Part of the 50S ribosomal subunit.

Functionally, binds 23S rRNA and is also seen to make contacts with the A and possibly P site tRNAs. This Prochlorococcus marinus (strain MIT 9312) protein is Large ribosomal subunit protein uL16.